Here is a 256-residue protein sequence, read N- to C-terminus: Acetyl-coenzyme A carboxylase carboxyl transferase subunit alpha (256 aa).

The 236-residue stretch at 1-236 (MSDVARILKE…KTAIVDELAE (236 aa)) folds into the CoA carboxyltransferase C-terminal domain.

Belongs to the AccA family. In terms of assembly, acetyl-CoA carboxylase is a heterohexamer composed of biotin carboxyl carrier protein (AccB), biotin carboxylase (AccC) and two subunits each of ACCase subunit alpha (AccA) and ACCase subunit beta (AccD).

Its subcellular location is the cytoplasm. It carries out the reaction N(6)-carboxybiotinyl-L-lysyl-[protein] + acetyl-CoA = N(6)-biotinyl-L-lysyl-[protein] + malonyl-CoA. The protein operates within lipid metabolism; malonyl-CoA biosynthesis; malonyl-CoA from acetyl-CoA: step 1/1. Its function is as follows. Component of the acetyl coenzyme A carboxylase (ACC) complex. First, biotin carboxylase catalyzes the carboxylation of biotin on its carrier protein (BCCP) and then the CO(2) group is transferred by the carboxyltransferase to acetyl-CoA to form malonyl-CoA. This is Acetyl-coenzyme A carboxylase carboxyl transferase subunit alpha from Streptococcus thermophilus (strain CNRZ 1066).